Reading from the N-terminus, the 186-residue chain is Probable chorismate pyruvate-lyase (186 aa).

Residues Arg-80, Leu-118, and Glu-170 each contribute to the substrate site.

This sequence belongs to the UbiC family.

The protein resides in the cytoplasm. It catalyses the reaction chorismate = 4-hydroxybenzoate + pyruvate. The protein operates within cofactor biosynthesis; ubiquinone biosynthesis. Its function is as follows. Removes the pyruvyl group from chorismate, with concomitant aromatization of the ring, to provide 4-hydroxybenzoate (4HB) for the ubiquinone pathway. The polypeptide is Probable chorismate pyruvate-lyase (Pseudomonas syringae pv. syringae (strain B728a)).